The chain runs to 727 residues: MGRRAKMVEKVKTLMETHDQIRNMGICAHIDHGKTTLSDNLLAGAGMISKELAGDQLALDFDEEEAARGITIYAANVSMVHEYGGKEYLINLIDTPGHVDFGGDVTRAMRAIDGAVVVCCAVEGVMPQTETVLRQALKEKVKPVLFINKVDRLINELKLTPEELQGRFMKIIAEVNKLIEKMAPEEFKTEWLCDVANGKVAFGSAYNNWAISVPYMQRSGISFKDIIDYCEQEKQGELADKAPLHEVVLDMSIKHLPNPLQAQKYRIPNIWKGDAESAIGKSMVECNPNGPLAGVVTKIIVDKHAGAISACRLFSGRIKQGDDLYLVGSKQKARAQQVSIFMGAERVQVPSISAGNICALTGLREATAGETVCSPSEILEPGFESLSHTSEPVITVAIEAKNTKDLPKLIEILRQIAREDNTVRVEINEETGEHLISGMGELHIEVITNTKIGRDGGIEVDVGEPIVVYRETIMGTSPEIEGKSPNKHNKLYMIAEPMEESVYAAYVEGKLHDEDYKKKTTADGEARLVEAGLEKDQAKKVMSIYNGNMIVNMTRGIVQLDEARELIIEGFKEGVRNGPLAAEKVQGVKIKLMDATFHEDAIHRGPAQIIPAVRFGVRDAVSQAKPVLLEPMQSVYINTPQDYMGDGMKEINNRRGQILDMEQEGDMSIIKSSVPVAEMFGFAGAIRGATQGRCLWSVEFSGFEKVPGELQPKIVKQIRDRKGLKSE.

One can recognise a tr-type G domain in the interval aspartate 19–leucine 260. Residues alanine 28 to threonine 35, aspartate 94 to histidine 98, and asparagine 148 to aspartate 151 contribute to the GTP site. Histidine 603 carries the post-translational modification Diphthamide.

The protein belongs to the TRAFAC class translation factor GTPase superfamily. Classic translation factor GTPase family. EF-G/EF-2 subfamily.

It localises to the cytoplasm. Functionally, catalyzes the GTP-dependent ribosomal translocation step during translation elongation. During this step, the ribosome changes from the pre-translocational (PRE) to the post-translocational (POST) state as the newly formed A-site-bound peptidyl-tRNA and P-site-bound deacylated tRNA move to the P and E sites, respectively. Catalyzes the coordinated movement of the two tRNA molecules, the mRNA and conformational changes in the ribosome. This Methanococcus maripaludis (strain C5 / ATCC BAA-1333) protein is Elongation factor 2.